Reading from the N-terminus, the 459-residue chain is MSNKAWGGRFEVQPEEWVDDFNASITFDQTLIDQDIEGSIAHATMLANQGIISQQDSEQIIQGLKSIQHDYHQDQIQFSASLEDIHLNIEHELIKRIGDAGGKLHTGRSRNDQVATDMHLYTKKQVQDIIALIKSLQSVIVDIASNNVDTIMPGYTHLQRAQPISFAHHIMTYFWMLQRDQQRFEDSLKRIDINPLGAAALSGTTYPIDRHETTALLNFGSLYENSLDAVSDRDYIIETLHNISLTMVHLSRFAEEIIFWSTDEAKFITLSDAFSTGSSIMPQKKNPDMAELIRGKVGRTTGHLMSMLMTLKGLPLAYNKDMQEDKEGLFDAVHTIKGSLRIFEGMIQTMTINKERLNQTVKEDFSNATELADYLVTKNIPFRTAHEIVGKIVLECIQQGHYLLDVPLATYQQHHSSIDADIYDYLQPENCLKRRQSYGSTGQSSVIQQLDVAKQLLSQ.

Belongs to the lyase 1 family. Argininosuccinate lyase subfamily.

Its subcellular location is the cytoplasm. The catalysed reaction is 2-(N(omega)-L-arginino)succinate = fumarate + L-arginine. Its pathway is amino-acid biosynthesis; L-arginine biosynthesis; L-arginine from L-ornithine and carbamoyl phosphate: step 3/3. This Staphylococcus aureus (strain bovine RF122 / ET3-1) protein is Argininosuccinate lyase.